Here is a 377-residue protein sequence, read N- to C-terminus: Transcription factor ast-1 (377 aa).

Residues P72–S143 are disordered. 2 stretches are compositionally biased toward low complexity: residues S96–K109 and T118–E142. A DNA-binding region (ETS) is located at residues T214–D294.

The protein belongs to the ETS family. In terms of tissue distribution, expressed in the A-neurons in the male-specific genital sensilla (simple sense organs) known as rays.

Its subcellular location is the nucleus. The protein resides in the cell projection. The protein localises to the neuron projection. Its function is as follows. Transcription factor. Probably binds to DNA sequences containing the consensus motif 5'-CGGA[AT][AG]-3'. Positively modulates expression of dopamine pathway genes, acting as a terminal selector for differentiation of dopaminergic neurons; may act in concert with homeobox proteins ceh-40, ceh-43 and ceh-20. Required for axon navigation in some interneurons, perhaps acting in the same pathways as basement membrane protein nid-1 and unc-6/netrin. Plays a role in the differentiation of the ventral cord pioneer neuron AVG. Required for morphogenesis of the pharynx. The sequence is that of Transcription factor ast-1 from Caenorhabditis elegans.